Consider the following 138-residue polypeptide: Superoxide dismutase [Mn] (138 aa).

Residues H1, H49, D133, and H137 each coordinate Mn(2+).

It belongs to the iron/manganese superoxide dismutase family. Mn(2+) serves as cofactor.

It carries out the reaction 2 superoxide + 2 H(+) = H2O2 + O2. In terms of biological role, destroys superoxide anion radicals which are normally produced within the cells and which are toxic to biological systems. In Mycobacterium malmoense, this protein is Superoxide dismutase [Mn] (sodA).